The sequence spans 452 residues: tRNA modification GTPase MnmE (452 aa).

Positions 22, 79, and 119 each coordinate (6S)-5-formyl-5,6,7,8-tetrahydrofolate. Residues 215 to 375 (GMKVVIAGRP…LRQHLKQSMG (161 aa)) form the TrmE-type G domain. Asn225 is a K(+) binding site. GTP contacts are provided by residues 225–230 (NAGKSS), 244–250 (TDIAGTT), 269–272 (DTAG), and 333–336 (NKAD). Ser229 contacts Mg(2+). The K(+) site is built by Thr244, Ile246, and Thr249. Residue Thr250 coordinates Mg(2+). Lys452 contacts (6S)-5-formyl-5,6,7,8-tetrahydrofolate.

This sequence belongs to the TRAFAC class TrmE-Era-EngA-EngB-Septin-like GTPase superfamily. TrmE GTPase family. In terms of assembly, homodimer. Heterotetramer of two MnmE and two MnmG subunits. K(+) is required as a cofactor.

The protein localises to the cytoplasm. Its function is as follows. Exhibits a very high intrinsic GTPase hydrolysis rate. Involved in the addition of a carboxymethylaminomethyl (cmnm) group at the wobble position (U34) of certain tRNAs, forming tRNA-cmnm(5)s(2)U34. The protein is tRNA modification GTPase MnmE of Histophilus somni (strain 2336) (Haemophilus somnus).